Reading from the N-terminus, the 33-residue chain is ATP synthase 27 kDa subunit, mitochondrial (33 aa).

Its subcellular location is the mitochondrion. The protein resides in the mitochondrion inner membrane. Its function is as follows. Mitochondrial membrane ATP synthase (F(1)F(0) ATP synthase or Complex V) produces ATP from ADP in the presence of a proton gradient across the membrane which is generated by electron transport complexes of the respiratory chain. F-type ATPases consist of two structural domains, F(1) - containing the extramembraneous catalytic core and F(0) - containing the membrane proton channel, linked together by a central stalk and a peripheral stalk. During catalysis, ATP synthesis in the catalytic domain of F(1) is coupled via a rotary mechanism of the central stalk subunits to proton translocation. Part of the complex F(0) domain. This Solanum tuberosum (Potato) protein is ATP synthase 27 kDa subunit, mitochondrial.